Reading from the N-terminus, the 116-residue chain is Putative pterin-4-alpha-carbinolamine dehydratase (116 aa).

It belongs to the pterin-4-alpha-carbinolamine dehydratase family.

The catalysed reaction is (4aS,6R)-4a-hydroxy-L-erythro-5,6,7,8-tetrahydrobiopterin = (6R)-L-erythro-6,7-dihydrobiopterin + H2O. The chain is Putative pterin-4-alpha-carbinolamine dehydratase from Paracidovorax citrulli (strain AAC00-1) (Acidovorax citrulli).